A 235-amino-acid polypeptide reads, in one-letter code: RNA pyrophosphohydrolase (235 aa).

Positions 6–149 (GFRPNVGIIL…KRGVYEMALT (144 aa)) constitute a Nudix hydrolase domain. The Nudix box signature appears at 38–59 (GGIDRGENPEQAMFRELHEEVG). Positions 184 to 235 (ANQSGEPGSFPAAGGIPSYATRPGAPFELPPGATFEPDPQTSFGVNAPTKKT) are disordered.

It belongs to the Nudix hydrolase family. RppH subfamily. It depends on a divalent metal cation as a cofactor.

Accelerates the degradation of transcripts by removing pyrophosphate from the 5'-end of triphosphorylated RNA, leading to a more labile monophosphorylated state that can stimulate subsequent ribonuclease cleavage. This chain is RNA pyrophosphohydrolase, found in Polaromonas naphthalenivorans (strain CJ2).